A 414-amino-acid chain; its full sequence is Serine hydroxymethyltransferase (414 aa).

(6S)-5,6,7,8-tetrahydrofolate-binding positions include L117 and 121–123 (GHL). At K226 the chain carries N6-(pyridoxal phosphate)lysine.

Belongs to the SHMT family. As to quaternary structure, homodimer. It depends on pyridoxal 5'-phosphate as a cofactor.

The protein resides in the cytoplasm. The catalysed reaction is (6R)-5,10-methylene-5,6,7,8-tetrahydrofolate + glycine + H2O = (6S)-5,6,7,8-tetrahydrofolate + L-serine. Its pathway is one-carbon metabolism; tetrahydrofolate interconversion. The protein operates within amino-acid biosynthesis; glycine biosynthesis; glycine from L-serine: step 1/1. In terms of biological role, catalyzes the reversible interconversion of serine and glycine with tetrahydrofolate (THF) serving as the one-carbon carrier. This reaction serves as the major source of one-carbon groups required for the biosynthesis of purines, thymidylate, methionine, and other important biomolecules. Also exhibits THF-independent aldolase activity toward beta-hydroxyamino acids, producing glycine and aldehydes, via a retro-aldol mechanism. This Dictyoglomus thermophilum (strain ATCC 35947 / DSM 3960 / H-6-12) protein is Serine hydroxymethyltransferase.